We begin with the raw amino-acid sequence, 637 residues long: Chaperone protein DnaK (637 aa).

Thr-198 carries the post-translational modification Phosphothreonine; by autocatalysis. The interval 597–637 (MYQQQAEGDAARDAAQDAAKDDVVDAEFTEVDDDKNDKKSA) is disordered. Over residues 605 to 619 (DAARDAAQDAAKDDV) the composition is skewed to basic and acidic residues. The span at 620 to 630 (VDAEFTEVDDD) shows a compositional bias: acidic residues.

Belongs to the heat shock protein 70 family.

Functionally, acts as a chaperone. The protein is Chaperone protein DnaK of Afipia carboxidovorans (strain ATCC 49405 / DSM 1227 / KCTC 32145 / OM5) (Oligotropha carboxidovorans).